A 337-amino-acid chain; its full sequence is uncharacterized protein (337 aa).

A run of 2 helical transmembrane segments spans residues 241-261 (FTLL…GAFI) and 273-293 (ASLI…IGII).

The protein belongs to the glycosyltransferase 2 family.

The protein resides in the cell membrane. This is an uncharacterized protein from Bacillus subtilis (strain 168).